The following is a 409-amino-acid chain: Argininosuccinate synthase (409 aa).

ATP-binding positions include 16–24 (AYSGGLDTS) and Ala44. L-citrulline contacts are provided by Tyr96 and Ser101. Gly126 is a binding site for ATP. L-aspartate contacts are provided by Thr128, Asn132, and Asp133. Asn132 lines the L-citrulline pocket. Residues Arg136, Ser185, Ser194, Glu270, and Tyr282 each coordinate L-citrulline.

The protein belongs to the argininosuccinate synthase family. Type 1 subfamily. Homotetramer.

The protein localises to the cytoplasm. It catalyses the reaction L-citrulline + L-aspartate + ATP = 2-(N(omega)-L-arginino)succinate + AMP + diphosphate + H(+). It functions in the pathway amino-acid biosynthesis; L-arginine biosynthesis; L-arginine from L-ornithine and carbamoyl phosphate: step 2/3. The sequence is that of Argininosuccinate synthase from Shewanella piezotolerans (strain WP3 / JCM 13877).